The primary structure comprises 728 residues: Catalase-peroxidase 1 (728 aa).

The segment at residues 91-218 is a cross-link (tryptophyl-tyrosyl-methioninium (Trp-Tyr) (with M-244)); it reads WHGAGTYRIA…LAAVQMGLIY (128 aa). Histidine 92 (proton acceptor) is an active-site residue. The segment at residues 218-244 is a cross-link (tryptophyl-tyrosyl-methioninium (Tyr-Met) (with W-91)); sequence YVNPEGPDGKPDPVAAARDIRDTFARM. Residue histidine 259 coordinates heme b.

The protein belongs to the peroxidase family. Peroxidase/catalase subfamily. Homodimer or homotetramer. It depends on heme b as a cofactor. Post-translationally, formation of the three residue Trp-Tyr-Met cross-link is important for the catalase, but not the peroxidase activity of the enzyme.

It catalyses the reaction H2O2 + AH2 = A + 2 H2O. The catalysed reaction is 2 H2O2 = O2 + 2 H2O. Bifunctional enzyme with both catalase and broad-spectrum peroxidase activity. The protein is Catalase-peroxidase 1 of Burkholderia vietnamiensis (strain G4 / LMG 22486) (Burkholderia cepacia (strain R1808)).